A 174-amino-acid chain; its full sequence is Guided entry of tail-anchored proteins factor 1 (174 aa).

The Lumenal segment spans residues 1–8; it reads MSASETDR. A helical membrane pass occupies residues 9-29; sequence WAWLLVLCFVFGCNVLRILLP. Residues 30-99 are Cytoplasmic-facing; sequence TLSSFISRVL…VKARTAQLAK (70 aa). Positions 39–94 form a coiled coil; it reads LQKDAEQESQMRAEIQSMKQELSTVNMMDEFARYARLERKINKMTDKLKTHVKART. The interaction with GET3/TRC40 stretch occupies residues 39–97; it reads LQKDAEQESQMRAEIQSMKQELSTVNMMDEFARYARLERKINKMTDKLKTHVKARTAQL. Residues 100 to 120 traverse the membrane as a helical segment; the sequence is IKWFISVAFYVLQAALMISLI. The Lumenal segment spans residues 121–148; that stretch reads WKYYSVPVAVVPSKWITPLDRLVAFPTR. The chain crosses the membrane as a helical span at residues 149 to 169; the sequence is VAGGIGVTCWILVCNKVVAII. Over 170–174 the chain is Cytoplasmic; the sequence is LHPFS.

This sequence belongs to the WRB/GET1 family. In terms of assembly, component of the Golgi to ER traffic (GET) complex, which is composed of GET1, CAMLG/GET2 and GET3. Within the complex, GET1 and CAMLG form a heterotetramer which is stabilized by phosphatidylinositol binding and which binds to the GET3 homodimer. Interacts with CAMLG/GET2 (via C-terminus). GET3 shows a higher affinity for CAMLG than for GET1.

It localises to the endoplasmic reticulum membrane. Its function is as follows. Required for the post-translational delivery of tail-anchored (TA) proteins to the endoplasmic reticulum. Together with CAMLG/GET2, acts as a membrane receptor for soluble GET3/TRC40, which recognizes and selectively binds the transmembrane domain of TA proteins in the cytosol. Required to ensure correct topology and ER insertion of CAMLG. In Rattus norvegicus (Rat), this protein is Guided entry of tail-anchored proteins factor 1.